A 153-amino-acid polypeptide reads, in one-letter code: Type II secretion system core protein G (153 aa).

Residues 1–7 (MERRQRG) constitute a propeptide, leader sequence. Phenylalanine 8 bears the N-methylphenylalanine mark. The chain crosses the membrane as a helical span at residues 8–28 (FTLLEIMVVIVILGVLASLVV). Disordered stretches follow at residues 68 to 91 (EQGLGALVKKPTTPPEPRNYPQDG) and 126 to 153 (MPDTDDDIGNWNVGNGAHNNGGNGNGNP). Over residues 134-143 (GNWNVGNGAH) the composition is skewed to low complexity. Gly residues predominate over residues 144–153 (NNGGNGNGNP).

It belongs to the GSP G family. Type II secretion system is composed of four main components: the outer membrane complex, the inner membrane complex, the cytoplasmic secretion ATPase and the periplasm-spanning pseudopilus. Forms homomultimers. In terms of processing, cleaved by the prepilin peptidase. Post-translationally, methylated by prepilin peptidase at the amino group of the N-terminal phenylalanine once the leader sequence is cleaved.

It localises to the cell inner membrane. In terms of biological role, core component of the type II secretion system required for the energy-dependent secretion of extracellular factors such as proteases and toxins from the periplasm. Pseudopilin (pilin-like) protein that polymerizes to form the pseudopilus. Further polymerization triggers pseudopilus growth. This is Type II secretion system core protein G (outG) from Dickeya chrysanthemi (Pectobacterium chrysanthemi).